We begin with the raw amino-acid sequence, 74 residues long: Putative membrane protein insertion efficiency factor (74 aa).

This sequence belongs to the UPF0161 family.

The protein localises to the cell membrane. In terms of biological role, could be involved in insertion of integral membrane proteins into the membrane. This is Putative membrane protein insertion efficiency factor from Bacillus pumilus (strain SAFR-032).